The sequence spans 211 residues: 2,3-bisphosphoglycerate-dependent phosphoglycerate mutase (211 aa).

Substrate-binding positions include Arg9–Asn16, Thr22–Gly23, Arg61, Glu88–Tyr91, Lys99, Arg115–Arg116, and Gly159–Asn160. Catalysis depends on His10, which acts as the Tele-phosphohistidine intermediate. Residue Glu88 is the Proton donor/acceptor of the active site.

The protein belongs to the phosphoglycerate mutase family. BPG-dependent PGAM subfamily. In terms of assembly, homodimer.

The catalysed reaction is (2R)-2-phosphoglycerate = (2R)-3-phosphoglycerate. It participates in carbohydrate degradation; glycolysis; pyruvate from D-glyceraldehyde 3-phosphate: step 3/5. Functionally, catalyzes the interconversion of 2-phosphoglycerate and 3-phosphoglycerate. The chain is 2,3-bisphosphoglycerate-dependent phosphoglycerate mutase from Rhizobium meliloti (strain 1021) (Ensifer meliloti).